A 185-amino-acid polypeptide reads, in one-letter code: ATP synthase subunit b (185 aa).

The chain crosses the membrane as a helical span at residues 26–46 (LVLIGFAILLFIVIKFVVPMF).

The protein belongs to the ATPase B chain family. As to quaternary structure, F-type ATPases have 2 components, F(1) - the catalytic core - and F(0) - the membrane proton channel. F(1) has five subunits: alpha(3), beta(3), gamma(1), delta(1), epsilon(1). F(0) has three main subunits: a(1), b(2) and c(10-14). The alpha and beta chains form an alternating ring which encloses part of the gamma chain. F(1) is attached to F(0) by a central stalk formed by the gamma and epsilon chains, while a peripheral stalk is formed by the delta and b chains.

It localises to the cell membrane. Its function is as follows. F(1)F(0) ATP synthase produces ATP from ADP in the presence of a proton or sodium gradient. F-type ATPases consist of two structural domains, F(1) containing the extramembraneous catalytic core and F(0) containing the membrane proton channel, linked together by a central stalk and a peripheral stalk. During catalysis, ATP synthesis in the catalytic domain of F(1) is coupled via a rotary mechanism of the central stalk subunits to proton translocation. In terms of biological role, component of the F(0) channel, it forms part of the peripheral stalk, linking F(1) to F(0). In Renibacterium salmoninarum (strain ATCC 33209 / DSM 20767 / JCM 11484 / NBRC 15589 / NCIMB 2235), this protein is ATP synthase subunit b.